The primary structure comprises 279 residues: 3-methyl-2-oxobutanoate hydroxymethyltransferase 2 (279 aa).

Mg(2+) is bound by residues D58 and D97. 3-methyl-2-oxobutanoate contacts are provided by residues 58 to 59 (DS), D97, and K126. E128 lines the Mg(2+) pocket. E195 acts as the Proton acceptor in catalysis.

Belongs to the PanB family. In terms of assembly, homodecamer; pentamer of dimers. The cofactor is Mg(2+).

It is found in the cytoplasm. The enzyme catalyses 3-methyl-2-oxobutanoate + (6R)-5,10-methylene-5,6,7,8-tetrahydrofolate + H2O = 2-dehydropantoate + (6S)-5,6,7,8-tetrahydrofolate. It participates in cofactor biosynthesis; (R)-pantothenate biosynthesis; (R)-pantoate from 3-methyl-2-oxobutanoate: step 1/2. Functionally, catalyzes the reversible reaction in which hydroxymethyl group from 5,10-methylenetetrahydrofolate is transferred onto alpha-ketoisovalerate to form ketopantoate. This is 3-methyl-2-oxobutanoate hydroxymethyltransferase 2 from Methylibium petroleiphilum (strain ATCC BAA-1232 / LMG 22953 / PM1).